Consider the following 186-residue polypeptide: Translation initiation factor IF-3 (186 aa).

The disordered stretch occupies residues M1–R21.

This sequence belongs to the IF-3 family. In terms of assembly, monomer.

The protein resides in the cytoplasm. IF-3 binds to the 30S ribosomal subunit and shifts the equilibrium between 70S ribosomes and their 50S and 30S subunits in favor of the free subunits, thus enhancing the availability of 30S subunits on which protein synthesis initiation begins. The protein is Translation initiation factor IF-3 of Borrelia turicatae (strain 91E135).